The following is a 359-amino-acid chain: Phospho-N-acetylmuramoyl-pentapeptide-transferase (359 aa).

Helical transmembrane passes span 3–23 (QILIAVAVALTVSILLTPALI), 55–75 (VAIIAGIWAGYLGTHLAGLAF), 80–100 (ISASGLLVLGLATVLGIVGFL), 117–137 (TAKTIGQVAAAVLFGVLALGF), 156–176 (IATVTLAPGLFVLFCVVVVSA), 187–207 (LDGLAAGSMAMVTAAYVLITF), 231–251 (LAIVAAATAGACIGFLWWNAA), 255–275 (IFMGDTGSLALGGIIAGISVT), 280–300 (ILAVVLGSLFVAEVSSVVLQI), and 334–354 (FWLLTAIACGLGVALFYGEWL).

This sequence belongs to the glycosyltransferase 4 family. MraY subfamily. Requires Mg(2+) as cofactor.

The protein resides in the cell membrane. It catalyses the reaction UDP-N-acetyl-alpha-D-muramoyl-L-alanyl-gamma-D-glutamyl-meso-2,6-diaminopimeloyl-D-alanyl-D-alanine + di-trans,octa-cis-undecaprenyl phosphate = di-trans,octa-cis-undecaprenyl diphospho-N-acetyl-alpha-D-muramoyl-L-alanyl-D-glutamyl-meso-2,6-diaminopimeloyl-D-alanyl-D-alanine + UMP. Its pathway is cell wall biogenesis; peptidoglycan biosynthesis. Its function is as follows. Catalyzes the initial step of the lipid cycle reactions in the biosynthesis of the cell wall peptidoglycan: transfers peptidoglycan precursor phospho-MurNAc-pentapeptide from UDP-MurNAc-pentapeptide onto the lipid carrier undecaprenyl phosphate, yielding undecaprenyl-pyrophosphoryl-MurNAc-pentapeptide, known as lipid I. This Mycolicibacterium paratuberculosis (strain ATCC BAA-968 / K-10) (Mycobacterium paratuberculosis) protein is Phospho-N-acetylmuramoyl-pentapeptide-transferase.